A 489-amino-acid polypeptide reads, in one-letter code: Pre-glycoprotein polyprotein GP complex (489 aa).

Gly2 carries the N-myristoyl glycine; by host lipid modification. Topologically, residues 2-17 (GQIVTFFQEVPHILEE) are extracellular. Residues 18–33 (VMNIVLMTLSILAILK) form a helical membrane-spanning segment. Residues 34-58 (GIYNVMTCGIIGLITFLFLCGRSCS) are Cytoplasmic-facing. Cys57 is a binding site for Zn(2+). Over 59–430 (SIYKDNYEFF…QSTTPLGLVD (372 aa)) the chain is Extracellular. N-linked (GlcNAc...) asparagine; by host glycans are attached at residues Asn78, Asn88, Asn98, Asn108, Asn118, and Asn166. Intrachain disulfides connect Cys85–Cys229, Cys117–Cys154, Cys179–Cys210, Cys277–Cys290, Cys299–Cys308, and Cys362–Cys383. Asn222 carries an N-linked (GlcNAc...) asparagine; by host glycan. 4 N-linked (GlcNAc...) asparagine; by host glycosylation sites follow: Asn363, Asn371, Asn388, and Asn393. A helical transmembrane segment spans residues 431–451 (LFVFSTSFYLISVFLHLIKIP). Over 452 to 489 (THRHIKGKPCPKPHRLNHMAICSCGFYKQPGLPTQWKR) the chain is Cytoplasmic. Zn(2+) contacts are provided by His453, His455, Cys461, His465, Cys473, and Cys475.

Belongs to the arenaviridae GPC protein family. Interacts with glycoprotein G2. Part of the GP complex (GP-C) together with glycoprotein G1 and glycoprotein G2. The GP-complex interacts with protein Z, which interacts with ribonucleocapsid; these interactions may induce virion budding. In terms of assembly, homotrimer; disulfide-linked. In pre-fusion state, G1 homotrimers bind G2 homotrimers via ionic interactions. Part of the GP complex (GP-C) together with glycoprotein G2 and the stable signal peptide. The GP-complex interacts with protein Z, which interacts with ribonucleocapsid; these interactions may induce virion budding. As to quaternary structure, homotrimer. Interacts with the stable signal peptide. In pre-fusion state, G2 homotrimers bind G1 homotrimers via ionic interactions. Part of the GP complex (GP-C) together with glycoprotein G1 and the stable signal peptide. Acidification in the endosome triggers rearrangements, which ultimately leads to a 6 helix bundle formed by the two heptad repeat domains (HR1 and HR2) in post-fusion state. The GP-complex interacts with protein Z, which interacts with ribonucleocapsid; these interactions may induce virion budding. Specific enzymatic cleavages in vivo yield mature proteins. GP-C polyprotein is cleaved in the endoplasmic reticulum by the host protease MBTPS1. Only cleaved glycoprotein is incorporated into virions. Post-translationally, the SSP remains stably associated with the GP complex following cleavage by signal peptidase and plays crucial roles in the trafficking of GP through the secretory pathway. In terms of processing, myristoylation is necessary for GP2-mediated fusion activity.

The protein resides in the virion membrane. It localises to the host endoplasmic reticulum membrane. Its subcellular location is the host Golgi apparatus membrane. It is found in the host cell membrane. In terms of biological role, functions as a cleaved signal peptide that is retained as the third component of the GP complex (GP-C). Helps to stabilize the spike complex in its native conformation. The SSP is required for efficient glycoprotein expression, post-translational maturation cleavage of G1 and G2, glycoprotein transport to the cell surface plasma membrane, formation of infectious virus particles, and acid pH-dependent glycoprotein-mediated cell fusion. Forms the virion spikes together with glycoprotein G2. The glycoprotein spike trimers are connected to the underlying matrix. Interacts with the host receptor leading to virus endocytosis. Functionally, forms the virion spikes together with glycoprotein G1. The glycoprotein spike trimers are connected to the underlying matrix. Class I viral fusion protein that directs fusion of viral and host endosomal membranes, leading to delivery of the nucleocapsid into the cytoplasm. Membrane fusion is mediated by irreversible conformational changes induced by acidification. This chain is Pre-glycoprotein polyprotein GP complex, found in Mastomys natalensis (African soft-furred rat).